The sequence spans 513 residues: ATP synthase subunit beta (513 aa).

A disordered region spans residues 1–29; it reads MATAPATEKKAPAKKAAAPKAAAPKKAAA. Residues 14-29 show a composition bias toward low complexity; that stretch reads KKAAAPKAAAPKKAAA. 186 to 193 provides a ligand contact to ATP; it reads GGAGVGKT.

The protein belongs to the ATPase alpha/beta chains family. In terms of assembly, F-type ATPases have 2 components, CF(1) - the catalytic core - and CF(0) - the membrane proton channel. CF(1) has five subunits: alpha(3), beta(3), gamma(1), delta(1), epsilon(1). CF(0) has three main subunits: a(1), b(2) and c(9-12). The alpha and beta chains form an alternating ring which encloses part of the gamma chain. CF(1) is attached to CF(0) by a central stalk formed by the gamma and epsilon chains, while a peripheral stalk is formed by the delta and b chains.

It is found in the cell inner membrane. The enzyme catalyses ATP + H2O + 4 H(+)(in) = ADP + phosphate + 5 H(+)(out). Functionally, produces ATP from ADP in the presence of a proton gradient across the membrane. The catalytic sites are hosted primarily by the beta subunits. The sequence is that of ATP synthase subunit beta from Sphingopyxis alaskensis (strain DSM 13593 / LMG 18877 / RB2256) (Sphingomonas alaskensis).